A 116-amino-acid polypeptide reads, in one-letter code: Large ribosomal subunit protein bL17 (116 aa).

The protein belongs to the bacterial ribosomal protein bL17 family. In terms of assembly, part of the 50S ribosomal subunit. Contacts protein L32.

The protein is Large ribosomal subunit protein bL17 of Nostoc punctiforme (strain ATCC 29133 / PCC 73102).